Reading from the N-terminus, the 763-residue chain is MNSRPSNPTKLVIRSSTLLFCGVVLIHLFAAQIDAQRSTSRWQTLNGDAPLVIARGGFSGLYPDSSIAAYQLATLTSVADVVLWCDLQLTKDGLGICFPDLNLANASTIDRVYPNREKSYSVNGVTTKGWFPNDFSLTELQNFLLIRGILSRTDRFDGNGYLISTIEDVVTTLNREGFWLNVQHDAFYEQQNLSMSSFLLSVSRTVSIDFISSPEVNFFKKITGSFGRNGPTFVFQFLGKEDFEPTTNRTYGSILSNLTFVKTFASGILVPKSYILPLDDEQYLVPHTSLVQDAHKAGLQVYVSGFANDVDIAYNYSSDPVSEYLSFVDNGDFSVDGVLSDFPITASAAVDCFSHIGRNATKQVDFLVISKDGASGDYPGCTDLAYEKAIKDGADVIDCSVQMSSDGVPFCLRSIDLRNSIAALQNTFSNRSTSVPEISSVPGIFTFSLTWPEIQSLTPAISNPFRVYRIFRNPREKNSGKLISLSQFLDLAKTYTSLSGVLISVENAAYLREKQGLDVVQAVLDTLTEAGYSNGTTTTKVMIQSTNSSVLVDFKKQSKYETVYKIEETIGNIRDSAIEDIKKFANAVVINKDSVFPNSDSFLTGQTNVVERLQKSQLPVYVELFRNEFVSQAYDFFSDATVEINAYIYGAGINGTITEFPFTAARYKRNRCLGREEVPPYMLPVNPGGLLNVMSPLSLPPAQAPNQDFIEADVTEPPLSPVIAKAPTSTPGTPSTIAQAPSGQTRLKLSLLLSVFFLSLLLL.

Positions 1-35 (MNSRPSNPTKLVIRSSTLLFCGVVLIHLFAAQIDA) are cleaved as a signal peptide. At 36 to 744 (QRSTSRWQTL…STIAQAPSGQ (709 aa)) the chain is on the extracellular side. The 301-residue stretch at 50-350 (PLVIARGGFS…DFPITASAAV (301 aa)) folds into the GP-PDE 1 domain. N-linked (GlcNAc...) asparagine glycans are attached at residues Asn-105, Asn-192, Asn-248, Asn-257, Asn-315, Asn-359, Asn-430, Asn-534, Asn-547, and Asn-654. The GP-PDE 2 domain occupies 366–668 (FLVISKDGAS…EFPFTAARYK (303 aa)). A helical transmembrane segment spans residues 745-762 (TRLKLSLLLSVFFLSLLL). Residue Leu-763 is a topological domain, cytoplasmic.

Belongs to the glycerophosphoryl diester phosphodiesterase family. Requires Ca(2+) as cofactor. In terms of tissue distribution, expressed in rosette and cauline leaves, stems, flowers and siliques.

Its subcellular location is the cell membrane. The catalysed reaction is a sn-glycero-3-phosphodiester + H2O = an alcohol + sn-glycerol 3-phosphate + H(+). In terms of biological role, hydrolyzes glycerolphosphoglycerol, glycerophosphocholine and glycerophosphoethanolamine in vitro. This is Glycerophosphodiester phosphodiesterase GDPDL1 from Arabidopsis thaliana (Mouse-ear cress).